We begin with the raw amino-acid sequence, 802 residues long: Endoplasmin (802 aa).

A signal peptide spans 1–21; that stretch reads MRALWVLGLCCVLLTFGSARA. An SRT pseudosubstrate motif motif is present at residues 42 to 44; it reads SRT. N-linked (GlcNAc...) asparagine glycosylation is present at Asn-62. At Ser-64 the chain carries Phosphoserine. Asn-107 carries an N-linked (GlcNAc...) asparagine glycan. The ATP site is built by Asn-107, Asp-149, and Asn-162. Lys-168 carries the post-translational modification N6-(2-hydroxyisobutyryl)lysine. Ser-172 is modified (phosphoserine). Phe-199 contacts ATP. An N-linked (GlcNAc...) asparagine glycan is attached at Asn-217. A disordered region spans residues 288–323; it reads TVEEPAEEEEAAKEEKEEADDEAAVEEEEEEKKPKT. Acidic residues predominate over residues 289–317; the sequence is VEEPAEEEEAAKEEKEEADDEAAVEEEEE. A Phosphoserine modification is found at Ser-403. An N6-succinyllysine modification is found at Lys-404. Residue Asn-445 is glycosylated (N-linked (GlcNAc...) asparagine). Ser-447 is subject to Phosphoserine. N6-acetyllysine is present on Lys-479. Residues Asn-481 and Asn-502 are each glycosylated (N-linked (GlcNAc...) asparagine). An N6-succinyllysine modification is found at Lys-633. The interval 750–802 is disordered; it reads DPDAKVEEEPEEEPEDTTEDTEQDEEEEMDAGTDEEEQEQEPEKKSTAEKDEL. Acidic residues predominate over residues 757-789; the sequence is EEPEEEPEDTTEDTEQDEEEEMDAGTDEEEQEQ. Thr-782 carries the post-translational modification Phosphothreonine. Basic and acidic residues predominate over residues 790–802; that stretch reads EPEKKSTAEKDEL. Positions 799–802 match the Prevents secretion from ER motif; sequence KDEL.

This sequence belongs to the heat shock protein 90 family. As to quaternary structure, homodimer; disulfide-linked. Component of an EIF2 complex at least composed of CELF1/CUGBP1, CALR, CALR3, EIF2S1, EIF2S2, HSP90B1 and HSPA5. Part of a large chaperone multiprotein complex comprising DNAJB11, HSP90B1, HSPA5, HYOU, PDIA2, PDIA4, PDIA6, PPIB, SDF2L1, UGGT1 and very small amounts of ERP29, but not, or at very low levels, CALR nor CANX. Interacts with AIMP1; regulates its retention in the endoplasmic reticulum. Hyperglycosylated form interacts with OS9; promoting its degradation by the endoplasmic reticulum associated degradation (ERAD). Interacts with CNPY3. This interaction is disrupted in the presence of ATP. Interacts with TLR4 and TLR9, but not with TLR3. Interacts with MZB1 in a calcium-dependent manner. Interacts with METTL23. Interacts with IL1B; the interaction facilitates cargo translocation into the ERGIC. Interacts with EIF2AK3. Post-translationally, phosphorylated by CK2. N-glycosylated cotranslationally at Asn-217 by STT3A-containing OST-A complex: this glycosylation is constitutive. In response to various stress, 5 additional facultative sites (Asn-62, Asn-107, Asn-445, Asn-481 and Asn-502) can be glycosylated post-translationally by STT3B-containing OST-B complex, leading to a hyperglycosylated form that is degraded by the ER-associated degradation (ERAD) pathway. In normal conditions, the OST-A complex together with CCDC134 prevent glycosylation at facultative sites during protein folding, thereby preventing hyperglycosylation. Mechanistically, nascent HSP90B1 is tethered during translation to a specialized CCDC134-containing translocon that forms a microenvironment for its folding, in which STT3A associates with the SRT pseudosubstrate motif, and prevents access to facultative glycosylation sites until folding is completed, rendering its facultative sites inaccessible to the OST-B complex.

Its subcellular location is the endoplasmic reticulum lumen. It localises to the sarcoplasmic reticulum lumen. The protein resides in the melanosome. The enzyme catalyses ATP + H2O = ADP + phosphate + H(+). Functionally, ATP-dependent chaperone involved in the processing of proteins in the endoplasmic reticulum, regulating their transport. Together with MESD, acts as a modulator of the Wnt pathway by promoting the folding of LRP6, a coreceptor of the canonical Wnt pathway. When associated with CNPY3, required for proper folding of Toll-like receptors. Promotes folding and trafficking of TLR4 to the cell surface. May participate in the unfolding of cytosolic leaderless cargos (lacking the secretion signal sequence) such as the interleukin 1/IL-1 to facilitate their translocation into the ERGIC (endoplasmic reticulum-Golgi intermediate compartment) and secretion; the translocation process is mediated by the cargo receptor TMED10. In Oryctolagus cuniculus (Rabbit), this protein is Endoplasmin (HSP90B1).